We begin with the raw amino-acid sequence, 432 residues long: Trigger factor (432 aa).

Positions 161–246 constitute a PPIase FKBP-type domain; it reads EDRVTIDFTG…LKKVEERELP (86 aa).

Belongs to the FKBP-type PPIase family. Tig subfamily. As to quaternary structure, homodimer and monomer. In vivo most of the ribosomes are in complex with monomeric TF. Uncomplexed TF, however, is in a monomer-dimer equilibrium with approximately two thirds of TF existing in a dimeric state.

The protein resides in the cytoplasm. It catalyses the reaction [protein]-peptidylproline (omega=180) = [protein]-peptidylproline (omega=0). Involved in protein export. Acts as a chaperone by maintaining the newly synthesized protein in an open conformation. Functions as a peptidyl-prolyl cis-trans isomerase. This is Trigger factor from Escherichia coli O139:H28 (strain E24377A / ETEC).